A 355-amino-acid polypeptide reads, in one-letter code: 3-isopropylmalate dehydrogenase (355 aa).

Substrate-binding residues include R90, R100, R128, and D222. Residues D222, D246, and D250 each contribute to the Mg(2+) site. 280–292 (GSAPDIAGKGVAN) lines the NAD(+) pocket.

This sequence belongs to the isocitrate and isopropylmalate dehydrogenases family. LeuB type 1 subfamily. As to quaternary structure, homodimer. Mg(2+) serves as cofactor. Mn(2+) is required as a cofactor.

Its subcellular location is the cytoplasm. It catalyses the reaction (2R,3S)-3-isopropylmalate + NAD(+) = 4-methyl-2-oxopentanoate + CO2 + NADH. It functions in the pathway amino-acid biosynthesis; L-leucine biosynthesis; L-leucine from 3-methyl-2-oxobutanoate: step 3/4. Catalyzes the oxidation of 3-carboxy-2-hydroxy-4-methylpentanoate (3-isopropylmalate) to 3-carboxy-4-methyl-2-oxopentanoate. The product decarboxylates to 4-methyl-2 oxopentanoate. The polypeptide is 3-isopropylmalate dehydrogenase (Cupriavidus pinatubonensis (strain JMP 134 / LMG 1197) (Cupriavidus necator (strain JMP 134))).